We begin with the raw amino-acid sequence, 287 residues long: Thymidylate synthase (287 aa).

Arginine 21 serves as a coordination point for dUMP. Histidine 51 is a binding site for (6R)-5,10-methylene-5,6,7,8-tetrahydrofolate. 150–151 (RR) serves as a coordination point for dUMP. Residue cysteine 170 is the Nucleophile of the active site. Residues 190–193 (RSGD), asparagine 201, and 231–233 (HIY) each bind dUMP. Position 193 (aspartate 193) interacts with (6R)-5,10-methylene-5,6,7,8-tetrahydrofolate. Alanine 286 provides a ligand contact to (6R)-5,10-methylene-5,6,7,8-tetrahydrofolate.

The protein belongs to the thymidylate synthase family. Bacterial-type ThyA subfamily. Homodimer.

Its subcellular location is the cytoplasm. The catalysed reaction is dUMP + (6R)-5,10-methylene-5,6,7,8-tetrahydrofolate = 7,8-dihydrofolate + dTMP. It participates in pyrimidine metabolism; dTTP biosynthesis. Its function is as follows. Catalyzes the reductive methylation of 2'-deoxyuridine-5'-monophosphate (dUMP) to 2'-deoxythymidine-5'-monophosphate (dTMP) while utilizing 5,10-methylenetetrahydrofolate (mTHF) as the methyl donor and reductant in the reaction, yielding dihydrofolate (DHF) as a by-product. This enzymatic reaction provides an intracellular de novo source of dTMP, an essential precursor for DNA biosynthesis. This Mycoplasma pneumoniae (strain ATCC 29342 / M129 / Subtype 1) (Mycoplasmoides pneumoniae) protein is Thymidylate synthase.